Reading from the N-terminus, the 550-residue chain is Amino acid transporter AVT1D (550 aa).

Basic and acidic residues predominate over residues 1–16 (MKLDEEFLHDRDHSFL). The disordered stretch occupies residues 1–99 (MKLDEEFLHD…FMPQSSSRRL (99 aa)). The span at 84–99 (TPPSVSFMPQSSSRRL) shows a compositional bias: polar residues. 11 helical membrane-spanning segments follow: residues 164–184 (SVLN…PYAI), 189–209 (WLGL…GVLM), 236–256 (FIIS…YIIM), 264–286 (LFPN…IFAI), 308–328 (SVGG…VGAV), 345–365 (LPVT…FPNI), 375–395 (FPLV…AVAV), 424–444 (VWTA…PIVM), 459–479 (GVSI…ALSV), 481–501 (FFAI…ALIF), and 521–541 (LCIF…YSAI).

It belongs to the amino acid/polyamine transporter 2 family. Amino acid/auxin permease (AAAP) (TC 2.A.18.5) subfamily.

It is found in the membrane. This chain is Amino acid transporter AVT1D, found in Arabidopsis thaliana (Mouse-ear cress).